Reading from the N-terminus, the 493-residue chain is Amino acid permease 2 (493 aa).

The Cytoplasmic segment spans residues 1–49 (MGETAAANNHRHHHHHGHQVFDVASHDFVPPQPAFKCFDDDGRLKRTGT). Transmembrane regions (helical) follow at residues 50-70 (VWTA…LSLA) and 71-91 (WAIA…FSLV). Topologically, residues 92–138 (TLYSSTLLSDCYRTGDAVSGKRNYTYMDAVRSILGGFKFKICGLIQY) are cytoplasmic. Residues 139-159 (LNLFGIAIGYTIAASISMMAI) form a helical membrane-spanning segment. At 160-175 (KRSNCFHKSGGKDPCH) the chain is on the extracellular side. Residues 176 to 196 (MSSNPYMIVFGVAEILLSQVP) form a helical membrane-spanning segment. The Cytoplasmic segment spans residues 197–200 (DFDQ). Residues 201–221 (IWWISIVAAVMSFTYSAIGLA) form a helical membrane-spanning segment. The Extracellular portion of the chain corresponds to 222–253 (LGIVQVAANGVFKGSLTGISIGTVTQTQKIWR). A helical transmembrane segment spans residues 254–274 (TFQALGDIAFAYSYSVVLIEI). The Cytoplasmic segment spans residues 275–293 (QDTVRSPPAESKTMKKATK). The chain crosses the membrane as a helical span at residues 294–314 (ISIAVTTIFYMLCGSMGYAAF). Residues 315–340 (GDAAPGNLLTGFGFYNPFWLLDIANA) lie on the Extracellular side of the membrane. The chain crosses the membrane as a helical span at residues 341 to 361 (AIVVHLVGAYQVFAQPIFAFI). Residues 362–396 (EKSVAERYPDNDFLSKEFEIRIPGFKSPYKVNVFR) lie on the Cytoplasmic side of the membrane. Residues 397–417 (MVYRSGFVVTTTVISMLMPFF) form a helical membrane-spanning segment. The Extracellular segment spans residues 418–419 (ND). A helical transmembrane segment spans residues 420-440 (VVGILGALGFWPLTVYFPVEM). The Cytoplasmic portion of the chain corresponds to 441 to 458 (YIKQRKVEKWSTRWVCLQ). Residues 459-479 (MLSVACLVISVVAGVGSIAGV) form a helical membrane-spanning segment. The Extracellular segment spans residues 480–493 (MLDLKVYKPFKSTY).

It belongs to the amino acid/polyamine transporter 2 family. Amino acid/auxin permease (AAAP) (TC 2.A.18.2) subfamily. In terms of tissue distribution, highly expressed in developing pods. Found in the vascular strands of siliques, cotyledons, leaves and roots, in the inner phloem of stems, and in the funiculi. Lower levels of expression in flowers. Not expressed in seeds.

It is found in the cell membrane. Its activity is regulated as follows. Inhibited by diethylpyrocarbonate (DEPC). Amino acid-proton symporter. Stereospecific transporter with a broad specificity for histidine, arginine, glutamate and neutral amino acids, favoring small amino acids such as alanine, asparagine and glutamine. Also accepts large aromatic residues such as phenlalanine or tyrosine. Has a much higher affinity for basic amino acids as compared with AAP1. May function in xylem-to-phloem transfer and in uptake of amino acids assimilated in the green silique tissue. This Arabidopsis thaliana (Mouse-ear cress) protein is Amino acid permease 2 (AAP2).